We begin with the raw amino-acid sequence, 89 residues long: Elongation factor 1-beta (89 aa).

The protein belongs to the EF-1-beta/EF-1-delta family.

Promotes the exchange of GDP for GTP in EF-1-alpha/GDP, thus allowing the regeneration of EF-1-alpha/GTP that could then be used to form the ternary complex EF-1-alpha/GTP/AAtRNA. The chain is Elongation factor 1-beta from Methanococcus maripaludis (strain C6 / ATCC BAA-1332).